Consider the following 467-residue polypeptide: Dimethylamine methyltransferase MtbB3 (467 aa).

Position 356 (pyrrolysine 356) is a non-standard amino acid, pyrrolysine.

This sequence belongs to the dimethylamine methyltransferase family.

The catalysed reaction is Co(I)-[dimethylamine-specific corrinoid protein] + dimethylamine + H(+) = methyl-Co(III)-[dimethylamine-specific corrinoid protein] + methylamine. The protein operates within one-carbon metabolism; methanogenesis from dimethylamine. Functionally, catalyzes the transfer of a methyl group from dimethylamine to the corrinoid cofactor of MtbC. This Methanosarcina mazei (strain ATCC BAA-159 / DSM 3647 / Goe1 / Go1 / JCM 11833 / OCM 88) (Methanosarcina frisia) protein is Dimethylamine methyltransferase MtbB3 (mtbB3).